The chain runs to 283 residues: Elongation factor Ts (283 aa).

Positions 80 to 83 are involved in Mg(2+) ion dislocation from EF-Tu; sequence TDFV.

The protein belongs to the EF-Ts family.

It localises to the cytoplasm. Functionally, associates with the EF-Tu.GDP complex and induces the exchange of GDP to GTP. It remains bound to the aminoacyl-tRNA.EF-Tu.GTP complex up to the GTP hydrolysis stage on the ribosome. The chain is Elongation factor Ts from Cronobacter sakazakii (strain ATCC BAA-894) (Enterobacter sakazakii).